We begin with the raw amino-acid sequence, 645 residues long: MSNRKQARLEAKRFIDTLSVEPYPNSQKSYLLGSRPDIRVPVREITLSDTLVGGSKDAPIFEPNEPICVYDTSGVYTDPSHDIDLYKGLPKLREEWIEERRDTHILPSMSSHFARERLADETLDELRYGHLPRIRRAMGQHRVTQLHYARQGIITPEMEFVAIRENSRRLAHQDPSLLQQHAGQNFGAHLPDLITPEFVRREIAEGRAIIPCNINHPESEPMIIGRNFLVKVNANIGNSSVSSSIEEEVEKLVWATRWGADTVMDLSTGRNIHETREWILRNSPVPIGTVPMYQALEKVNGVAENLTWEVMRDTLLEQAEQGVDYFTIHAGLLLRYVPMTAKRVTGIVSRGGSIIAKWCLSHHQENFLYTHFREICEICAQYDVALSLGDGLRPGSIADANDEAQFAELRTLGELTQIAWEYDVQVMIEGPGHVPMHLIKANMDEQLKHCHEAPFYTLGPLTTDIAPGYDHITSGIGAAMIGWFGCAMLCYVTPKEHLGLPNKEDVKTGLITYKLAAHAADLAKGHPGAQIRDNALSKARFEFRWEDQFNLALDPVTARAFHDETLPQESGKVAHFCSMCGPKFCSMKISQEVRDYANNQTLDTTVIDLVMPAESIQLAMQDKSREFLASGAELYHPLVKEPIEE.

Substrate-binding positions include N235, M264, Y293, H329, S349–G351, D390–R393, and E429. Zn(2+) is bound at residue H433. Y456 is a substrate binding site. H497 contacts Zn(2+). [4Fe-4S] cluster contacts are provided by C577, C580, and C585.

It belongs to the ThiC family. In terms of assembly, homodimer. The cofactor is [4Fe-4S] cluster.

It carries out the reaction 5-amino-1-(5-phospho-beta-D-ribosyl)imidazole + S-adenosyl-L-methionine = 4-amino-2-methyl-5-(phosphooxymethyl)pyrimidine + CO + 5'-deoxyadenosine + formate + L-methionine + 3 H(+). Its pathway is cofactor biosynthesis; thiamine diphosphate biosynthesis. Functionally, catalyzes the synthesis of the hydroxymethylpyrimidine phosphate (HMP-P) moiety of thiamine from aminoimidazole ribotide (AIR) in a radical S-adenosyl-L-methionine (SAM)-dependent reaction. In Vibrio cholerae serotype O1 (strain ATCC 39541 / Classical Ogawa 395 / O395), this protein is Phosphomethylpyrimidine synthase.